The primary structure comprises 201 residues: Potassium-transporting ATPase KdpC subunit (201 aa).

A helical membrane pass occupies residues 10 to 30 (VVLVVLTVICGLAYPLAMTGI). A disordered region spans residues 67 to 105 (HGRPSATSAADPADPTKTVSSPYNAANSSGSNLGPTSKA). The segment covering 70-82 (PSATSAADPADPT) has biased composition (low complexity). Over residues 83 to 105 (KTVSSPYNAANSSGSNLGPTSKA) the composition is skewed to polar residues.

It belongs to the KdpC family. In terms of assembly, the system is composed of three essential subunits: KdpA, KdpB and KdpC.

Its subcellular location is the cell inner membrane. In terms of biological role, part of the high-affinity ATP-driven potassium transport (or Kdp) system, which catalyzes the hydrolysis of ATP coupled with the electrogenic transport of potassium into the cytoplasm. This subunit acts as a catalytic chaperone that increases the ATP-binding affinity of the ATP-hydrolyzing subunit KdpB by the formation of a transient KdpB/KdpC/ATP ternary complex. The chain is Potassium-transporting ATPase KdpC subunit from Rhodopseudomonas palustris (strain BisB5).